We begin with the raw amino-acid sequence, 262 residues long: Putative phosphatase HI_0003 (262 aa).

Asp-9 serves as the catalytic Nucleophile. 2 residues coordinate Mg(2+): Asp-9 and Asn-11. Phosphate-binding positions include 43–44 (SA) and Lys-189. Residue Asp-212 participates in Mg(2+) binding. Asn-215 is a phosphate binding site.

The protein belongs to the HAD-like hydrolase superfamily. Cof family. It depends on Mg(2+) as a cofactor.

This chain is Putative phosphatase HI_0003, found in Haemophilus influenzae (strain ATCC 51907 / DSM 11121 / KW20 / Rd).